The primary structure comprises 354 residues: Ornithine cyclodeaminase (354 aa).

Positions 53 and 77 each coordinate L-ornithine. NAD(+) is bound by residues T92, R120, A147–Q148, D169, T209, V232–D235, K239, and S300. Position 120 (R120) interacts with L-ornithine. Residue D235 participates in L-ornithine binding. The active-site Proton donor/acceptor is D235. V301 is a binding site for L-ornithine.

It belongs to the ornithine cyclodeaminase/mu-crystallin family. NAD(+) serves as cofactor.

It carries out the reaction L-ornithine = L-proline + NH4(+). It participates in amino-acid biosynthesis; L-proline biosynthesis; L-proline from L-ornithine: step 1/1. With respect to regulation, is subject to substrate inhibition. Is regulated by L-arginine, which stimulates enzymatic activity at 0.1-1 mM while inhibits activity at higher concentrations, and has pronounced effects on the optima for pH and temperature and on the Km for L-ornithine. Is not inhibited by L-proline. Functionally, catalyzes the conversion of L-ornithine into L-proline with release of ammonia. Is involved in the utilization of nopaline, a catabolic pathway that proceeds through L-arginine and L-ornithine to L-proline. Nopaline is a predominant opine in plant cells transformed with Ti plasmid pTiC58. The polypeptide is Ornithine cyclodeaminase (Agrobacterium fabrum (strain C58 / ATCC 33970) (Agrobacterium tumefaciens (strain C58))).